The chain runs to 41 residues: MKVVSSLKSLKKRDKDCQIVKRRGKIFVINKKKKRFKAKQG.

This sequence belongs to the bacterial ribosomal protein bL36 family.

This is Large ribosomal subunit protein bL36 from Rickettsia canadensis (strain McKiel).